Here is a 134-residue protein sequence, read N- to C-terminus: Small ribosomal subunit protein uS11 (134 aa).

The interval serine 114–valine 134 is disordered.

It belongs to the universal ribosomal protein uS11 family. As to quaternary structure, part of the 30S ribosomal subunit. Interacts with proteins S7 and S18. Binds to IF-3.

Located on the platform of the 30S subunit, it bridges several disparate RNA helices of the 16S rRNA. Forms part of the Shine-Dalgarno cleft in the 70S ribosome. In Corynebacterium efficiens (strain DSM 44549 / YS-314 / AJ 12310 / JCM 11189 / NBRC 100395), this protein is Small ribosomal subunit protein uS11.